Reading from the N-terminus, the 529-residue chain is uncharacterized protein (529 aa).

The segment at residues 26 to 58 (CDSCRKQKTRCLAGSVEDENRACLRCRSLNMDC) is a DNA-binding region (zn(2)-C6 fungal-type).

The protein localises to the nucleus. This is an uncharacterized protein from Schizosaccharomyces pombe (strain 972 / ATCC 24843) (Fission yeast).